The following is a 283-amino-acid chain: Elongation factor Ts (283 aa).

The segment at 80-83 (TDFV) is involved in Mg(2+) ion dislocation from EF-Tu.

It belongs to the EF-Ts family.

The protein localises to the cytoplasm. Its function is as follows. Associates with the EF-Tu.GDP complex and induces the exchange of GDP to GTP. It remains bound to the aminoacyl-tRNA.EF-Tu.GTP complex up to the GTP hydrolysis stage on the ribosome. The chain is Elongation factor Ts from Citrobacter koseri (strain ATCC BAA-895 / CDC 4225-83 / SGSC4696).